A 431-amino-acid chain; its full sequence is D-tagatose-1,6-bisphosphate aldolase subunit KbaZ (431 aa).

This sequence belongs to the GatZ/KbaZ family. KbaZ subfamily. In terms of assembly, forms a complex with KbaY.

It functions in the pathway carbohydrate metabolism; D-tagatose 6-phosphate degradation; D-glyceraldehyde 3-phosphate and glycerone phosphate from D-tagatose 6-phosphate: step 2/2. Functionally, component of the tagatose-1,6-bisphosphate aldolase KbaYZ that is required for full activity and stability of the Y subunit. Could have a chaperone-like function for the proper and stable folding of KbaY. When expressed alone, KbaZ does not show any aldolase activity. This Salmonella arizonae (strain ATCC BAA-731 / CDC346-86 / RSK2980) protein is D-tagatose-1,6-bisphosphate aldolase subunit KbaZ.